The following is a 281-amino-acid chain: E2F-associated phosphoprotein (281 aa).

M1 is modified (N-acetylmethionine). Residues 1–27 are disordered; the sequence is MNRLQDDYDPYAVEEPSDEEPALSSSE. A compositionally biased stretch (acidic residues) spans 15–27; the sequence is EPSDEEPALSSSE. S17 carries the post-translational modification Phosphoserine. At T37 the chain carries Phosphothreonine. Phosphoserine is present on residues S109 and S111. The tract at residues 222–245 is disordered; that stretch reads PENRRKRRSAKKMRSNPEDPAERE. Positions 225 to 235 are enriched in basic residues; sequence RRKRRSAKKMR. Positions 236–245 are enriched in basic and acidic residues; that stretch reads SNPEDPAERE.

In terms of assembly, interacts with E2F1. The C-terminal half binds the N-terminal of E2F1. Also interacts with E2F2 and E2F3, but not E2F4.

It localises to the cytoplasm. It is found in the nucleus. Its function is as follows. May play an important role in the fine-tuning of both major E2F1 activities, the regulation of the cell-cycle and the induction of apoptosis. Promotes S-phase entry, and inhibits p14(ARP) expression. In Mus musculus (Mouse), this protein is E2F-associated phosphoprotein (Eapp).